The following is a 351-amino-acid chain: Transcription factor bHLH93 (351 aa).

The region spanning 174–223 (GQPSKNLMAERRRRKRLNDRLSMLRSIVPKISKMDRTSILGDAIDYMKEL) is the bHLH domain.

As to quaternary structure, homodimer. Interacts with FAMA. As to expression, broadly expressed.

Its subcellular location is the nucleus. Its function is as follows. Transcription factor. May be involved in the differentiation of stomatal guard cells. The polypeptide is Transcription factor bHLH93 (BHLH93) (Arabidopsis thaliana (Mouse-ear cress)).